The following is a 346-amino-acid chain: Alkanal monooxygenase alpha chain (346 aa).

As to quaternary structure, heterodimer of an alpha and a beta chain.

The catalysed reaction is a long-chain fatty aldehyde + FMNH2 + O2 = a long-chain fatty acid + hnu + FMN + H2O + 2 H(+). In terms of biological role, light-emitting reaction in luminous bacteria. This is Alkanal monooxygenase alpha chain (luxA) from Photobacterium phosphoreum.